A 134-amino-acid polypeptide reads, in one-letter code: Large ribosomal subunit protein uL22 (134 aa).

Belongs to the universal ribosomal protein uL22 family. Part of the 50S ribosomal subunit.

This protein binds specifically to 23S rRNA; its binding is stimulated by other ribosomal proteins, e.g. L4, L17, and L20. It is important during the early stages of 50S assembly. It makes multiple contacts with different domains of the 23S rRNA in the assembled 50S subunit and ribosome. In terms of biological role, the globular domain of the protein is located near the polypeptide exit tunnel on the outside of the subunit, while an extended beta-hairpin is found that lines the wall of the exit tunnel in the center of the 70S ribosome. The protein is Large ribosomal subunit protein uL22 of Karelsulcia muelleri (strain GWSS) (Sulcia muelleri).